The following is an 83-amino-acid chain: MPKKILKGTVVSDKMDKTVVVSVERVFQHPLYKKTIKTRKKYKAHDEENICQLGDMVEIIESSPISKTKRWKVLRIVKEGDTQ.

The protein belongs to the universal ribosomal protein uS17 family. As to quaternary structure, part of the 30S ribosomal subunit.

In terms of biological role, one of the primary rRNA binding proteins, it binds specifically to the 5'-end of 16S ribosomal RNA. The polypeptide is Small ribosomal subunit protein uS17 (Thermodesulfovibrio yellowstonii (strain ATCC 51303 / DSM 11347 / YP87)).